A 308-amino-acid polypeptide reads, in one-letter code: GTPase Era (308 aa).

The Era-type G domain occupies 14–181 (RCGFVALIGA…KQALAAMVPP (168 aa)). The G1 stretch occupies residues 22–29 (GAPNVGKS). 22-29 (GAPNVGKS) lines the GTP pocket. The interval 48-52 (QTTRA) is G2. The tract at residues 69–72 (DTPG) is G3. Residues 69-73 (DTPGI) and 131-134 (NKVD) contribute to the GTP site. A G4 region spans residues 131 to 134 (NKVD). The G5 stretch occupies residues 160-162 (ISA). In terms of domain architecture, KH type-2 spans 212-289 (LHQELPYQST…HLFLFVKVRE (78 aa)).

It belongs to the TRAFAC class TrmE-Era-EngA-EngB-Septin-like GTPase superfamily. Era GTPase family. Monomer.

The protein localises to the cytoplasm. Its subcellular location is the cell inner membrane. Its function is as follows. An essential GTPase that binds both GDP and GTP, with rapid nucleotide exchange. Plays a role in 16S rRNA processing and 30S ribosomal subunit biogenesis and possibly also in cell cycle regulation and energy metabolism. The protein is GTPase Era of Bradyrhizobium sp. (strain BTAi1 / ATCC BAA-1182).